The sequence spans 403 residues: Imidazolonepropionase (403 aa).

His69 and His71 together coordinate Fe(3+). Zn(2+)-binding residues include His69 and His71. 4-imidazolone-5-propanoate is bound by residues Arg78, Tyr141, and His174. Tyr141 is a binding site for N-formimidoyl-L-glutamate. Residue His239 participates in Fe(3+) binding. His239 is a binding site for Zn(2+). Gln242 contacts 4-imidazolone-5-propanoate. Residue Asp314 coordinates Fe(3+). Asp314 contacts Zn(2+). N-formimidoyl-L-glutamate-binding residues include Asn316 and Gly318. Ser319 contributes to the 4-imidazolone-5-propanoate binding site.

Belongs to the metallo-dependent hydrolases superfamily. HutI family. Zn(2+) serves as cofactor. Fe(3+) is required as a cofactor.

Its subcellular location is the cytoplasm. The catalysed reaction is 4-imidazolone-5-propanoate + H2O = N-formimidoyl-L-glutamate. Its pathway is amino-acid degradation; L-histidine degradation into L-glutamate; N-formimidoyl-L-glutamate from L-histidine: step 3/3. In terms of biological role, catalyzes the hydrolytic cleavage of the carbon-nitrogen bond in imidazolone-5-propanoate to yield N-formimidoyl-L-glutamate. It is the third step in the universal histidine degradation pathway. The protein is Imidazolonepropionase of Legionella pneumophila (strain Corby).